A 171-amino-acid polypeptide reads, in one-letter code: MDRIQKEASVEELNGIFSEAGSVVMAHYNGMTVAEMTELRAKLRELGGTFKVVRNRLAKIALQGKPGEGAADLFTGPVAIAYSEDFVAAPKVLVEYAKSNDKLVILGGFMEEDVFDAAGIDALSKMPSREELIATISARLMGQASQVAQRLMAPAQGLAGAIDVIREKADA.

It belongs to the universal ribosomal protein uL10 family. Part of the ribosomal stalk of the 50S ribosomal subunit. The N-terminus interacts with L11 and the large rRNA to form the base of the stalk. The C-terminus forms an elongated spine to which L12 dimers bind in a sequential fashion forming a multimeric L10(L12)X complex.

In terms of biological role, forms part of the ribosomal stalk, playing a central role in the interaction of the ribosome with GTP-bound translation factors. The protein is Large ribosomal subunit protein uL10 of Maricaulis maris (strain MCS10) (Caulobacter maris).